We begin with the raw amino-acid sequence, 115 residues long: NADH-ubiquinone oxidoreductase chain 3 (115 aa).

3 consecutive transmembrane segments (helical) span residues 3–23, 55–75, and 84–104; these read VMLALLTNTLLSTLLVLIAFW, FFLVAITFLLFDLEIALLLPL, and LPTMLTMALLLISLLAASLAY.

This sequence belongs to the complex I subunit 3 family. In terms of assembly, core subunit of respiratory chain NADH dehydrogenase (Complex I) which is composed of 45 different subunits. Interacts with TMEM186. Interacts with TMEM242.

Its subcellular location is the mitochondrion inner membrane. It catalyses the reaction a ubiquinone + NADH + 5 H(+)(in) = a ubiquinol + NAD(+) + 4 H(+)(out). Its function is as follows. Core subunit of the mitochondrial membrane respiratory chain NADH dehydrogenase (Complex I) which catalyzes electron transfer from NADH through the respiratory chain, using ubiquinone as an electron acceptor. Essential for the catalytic activity of complex I. This Felis catus (Cat) protein is NADH-ubiquinone oxidoreductase chain 3.